Reading from the N-terminus, the 360-residue chain is MSLSRLSIDAFRNIDSAQLAPGAGLNLIYGHNGSGKTSILEAIYFLGMGRSFRSHLSQRVIQNDADCLTLFAVAEGQAGDSRIGLRRHRSGDTEVKIDGEKVKRLSQLAEALPIQVITPESFSLLFEGPSARRQFIDWGAFHASKQFHLAWMNTRRILKQRNQLLRDGASYEHIAFWDKELIRYALEVTAIRNDYVGSLNGVLKGIIGEFLPDVDIRVSFTRGWDSKTDFSELLQSQYARDLAIGHTVSGPHKADLRLRVGNLPAQDALSRGQLKLLVCALRIAQGKLLKQQIDKHSIYLVDDLPSELDAKHRQLLLKELIDTGAQLFVTAIEPSAIVDSLPVPPDRMFHVQAGRVTQTK.

30–37 contributes to the ATP binding site; that stretch reads GHNGSGKT.

The protein belongs to the RecF family.

Its subcellular location is the cytoplasm. In terms of biological role, the RecF protein is involved in DNA metabolism; it is required for DNA replication and normal SOS inducibility. RecF binds preferentially to single-stranded, linear DNA. It also seems to bind ATP. The sequence is that of DNA replication and repair protein RecF from Shewanella amazonensis (strain ATCC BAA-1098 / SB2B).